Reading from the N-terminus, the 210-residue chain is Imidazole glycerol phosphate synthase subunit HisH (210 aa).

The Glutamine amidotransferase type-1 domain maps to 1–205 (MIAVINYGAG…VELALSRGSG (205 aa)). Residue C79 is the Nucleophile of the active site. Residues H180 and E182 contribute to the active site.

In terms of assembly, heterodimer of HisH and HisF.

Its subcellular location is the cytoplasm. The enzyme catalyses 5-[(5-phospho-1-deoxy-D-ribulos-1-ylimino)methylamino]-1-(5-phospho-beta-D-ribosyl)imidazole-4-carboxamide + L-glutamine = D-erythro-1-(imidazol-4-yl)glycerol 3-phosphate + 5-amino-1-(5-phospho-beta-D-ribosyl)imidazole-4-carboxamide + L-glutamate + H(+). It carries out the reaction L-glutamine + H2O = L-glutamate + NH4(+). It participates in amino-acid biosynthesis; L-histidine biosynthesis; L-histidine from 5-phospho-alpha-D-ribose 1-diphosphate: step 5/9. IGPS catalyzes the conversion of PRFAR and glutamine to IGP, AICAR and glutamate. The HisH subunit catalyzes the hydrolysis of glutamine to glutamate and ammonia as part of the synthesis of IGP and AICAR. The resulting ammonia molecule is channeled to the active site of HisF. The polypeptide is Imidazole glycerol phosphate synthase subunit HisH (Herpetosiphon aurantiacus (strain ATCC 23779 / DSM 785 / 114-95)).